Here is a 411-residue protein sequence, read N- to C-terminus: Tyrosine--tRNA ligase (411 aa).

L-tyrosine is bound at residue Tyr33. Positions Pro38 to Asn47 match the 'HIGH' region motif. The L-tyrosine site is built by Tyr160 and Gln164. A 'KMSKS' region motif is present at residues Lys222 to Ser226. Lys225 lines the ATP pocket. An S4 RNA-binding domain is found at Ser347 to Val411.

The protein belongs to the class-I aminoacyl-tRNA synthetase family. TyrS type 1 subfamily. Homodimer.

Its subcellular location is the cytoplasm. It carries out the reaction tRNA(Tyr) + L-tyrosine + ATP = L-tyrosyl-tRNA(Tyr) + AMP + diphosphate + H(+). Catalyzes the attachment of tyrosine to tRNA(Tyr) in a two-step reaction: tyrosine is first activated by ATP to form Tyr-AMP and then transferred to the acceptor end of tRNA(Tyr). This chain is Tyrosine--tRNA ligase, found in Mycoplasmopsis agalactiae (strain NCTC 10123 / CIP 59.7 / PG2) (Mycoplasma agalactiae).